The chain runs to 87 residues: MPETTTTALDKEQLRELVADVLDLDVAEVTDDADFMEDLDVDSLMALEITVRLEKEYGVRLAEAELTSITSLQGTYELLTSKLGDTR.

A Carrier domain is found at Ala8–Leu83. Ser43 bears the O-(pantetheine 4'-phosphoryl)serine mark.

In terms of processing, 4'-phosphopantetheine is transferred from CoA to a specific serine of the apo-ACP-like protein.

In terms of biological role, acyl carrier protein. The polypeptide is Polyketide-8 synthase acyl carrier protein 2 (Streptomyces avermitilis (strain ATCC 31267 / DSM 46492 / JCM 5070 / NBRC 14893 / NCIMB 12804 / NRRL 8165 / MA-4680)).